The sequence spans 57 residues: uncharacterized protein (57 aa).

A helical transmembrane segment spans residues L24–I44.

This sequence to cation A.eutrophus efflux system protein CzcD.

It is found in the cell membrane. This is an uncharacterized protein from Bacillus caldolyticus.